A 414-amino-acid polypeptide reads, in one-letter code: Tyrosine--tRNA ligase (414 aa).

Tyr-35 lines the L-tyrosine pocket. Positions 40–49 (PTADSLHVGH) match the 'HIGH' region motif. Residues Tyr-164 and Gln-168 each contribute to the L-tyrosine site. Positions 226–230 (KFGKT) match the 'KMSKS' region motif. Position 229 (Lys-229) interacts with ATP. The S4 RNA-binding domain occupies 347–414 (TKVIDALVEL…KKKYFVILVK (68 aa)).

It belongs to the class-I aminoacyl-tRNA synthetase family. TyrS type 1 subfamily. In terms of assembly, homodimer.

The protein localises to the cytoplasm. The catalysed reaction is tRNA(Tyr) + L-tyrosine + ATP = L-tyrosyl-tRNA(Tyr) + AMP + diphosphate + H(+). Functionally, catalyzes the attachment of tyrosine to tRNA(Tyr) in a two-step reaction: tyrosine is first activated by ATP to form Tyr-AMP and then transferred to the acceptor end of tRNA(Tyr). In Mycoplasma capricolum subsp. capricolum (strain California kid / ATCC 27343 / NCTC 10154), this protein is Tyrosine--tRNA ligase.